The chain runs to 308 residues: U-box domain-containing protein 54 (308 aa).

Positions 172–235 (FSEFSTSAEK…NESDEDPRLE (64 aa)) are disordered. The span at 210–227 (ESPKKGRKETIEKSKSNE) shows a compositional bias: basic and acidic residues. The U-box domain maps to 232–306 (PRLEDFKCPI…KDWLEKNPNY (75 aa)).

The enzyme catalyses S-ubiquitinyl-[E2 ubiquitin-conjugating enzyme]-L-cysteine + [acceptor protein]-L-lysine = [E2 ubiquitin-conjugating enzyme]-L-cysteine + N(6)-ubiquitinyl-[acceptor protein]-L-lysine.. Its pathway is protein modification; protein ubiquitination. Functionally, functions as an E3 ubiquitin ligase. This chain is U-box domain-containing protein 54 (PUB54), found in Arabidopsis thaliana (Mouse-ear cress).